We begin with the raw amino-acid sequence, 233 residues long: Pilin-like protein PilA3 (233 aa).

A propeptide spans 1–4 (MKRG) (leader sequence). Residue F5 is modified to N-methylphenylalanine. The helical transmembrane segment at 5-25 (FTLVEVLVAMAILVVVLAVGV) threads the bilayer. Residues 121–143 (LRRSDVNATPSSGSDCTTPPPNS) are disordered. The segment covering 126-137 (VNATPSSGSDCT) has biased composition (polar residues).

The protein localises to the cell inner membrane. Its subcellular location is the cell outer membrane. The protein resides in the periplasm. Functionally, plays an essential role in natural DNA transformation but is not required for pilus biogenesis. The polypeptide is Pilin-like protein PilA3 (pilA3) (Thermus thermophilus (strain ATCC BAA-163 / DSM 7039 / HB27)).